The primary structure comprises 81 residues: Cytochrome b559 subunit alpha (81 aa).

Heme is bound by residues arginine 18 and histidine 23. A helical membrane pass occupies residues 19 to 40; it reads YWVIHSITIPMLFIAGWLFVST.

Belongs to the PsbE/PsbF family. In terms of assembly, heterodimer of an alpha subunit and a beta subunit. PSII is composed of 1 copy each of membrane proteins PsbA, PsbB, PsbC, PsbD, PsbE, PsbF, PsbH, PsbI, PsbJ, PsbK, PsbL, PsbM, PsbT, PsbX, PsbY, PsbZ, Psb30/Ycf12, peripheral proteins PsbO, CyanoQ (PsbQ), PsbU, PsbV and a large number of cofactors. It forms dimeric complexes. It depends on heme b as a cofactor.

It is found in the cellular thylakoid membrane. Its function is as follows. This b-type cytochrome is tightly associated with the reaction center of photosystem II (PSII). PSII is a light-driven water:plastoquinone oxidoreductase that uses light energy to abstract electrons from H(2)O, generating O(2) and a proton gradient subsequently used for ATP formation. It consists of a core antenna complex that captures photons, and an electron transfer chain that converts photonic excitation into a charge separation. The polypeptide is Cytochrome b559 subunit alpha (Synechocystis sp. (strain ATCC 27184 / PCC 6803 / Kazusa)).